A 115-amino-acid chain; its full sequence is U31-theraphotoxin-Cg1b (115 aa).

An N-terminal signal peptide occupies residues 1 to 18 (MKLCVIIIASLMVASVSG). A propeptide spanning residues 19–51 (RLRKIKGTELDKKMLLEKLGHGMDIRFEETPRE) is cleaved from the precursor. 4 disulfides stabilise this stretch: Cys52–Cys67, Cys60–Cys73, Cys64–Cys113, and Cys66–Cys86.

Belongs to the neurotoxin 03 (Tx2) family. 02 subfamily. As to expression, expressed by the venom gland.

Its subcellular location is the secreted. Probable ion channel inhibitor. In Chilobrachys guangxiensis (Chinese earth tiger tarantula), this protein is U31-theraphotoxin-Cg1b.